The sequence spans 975 residues: P3N-PIPO polyprotein (975 aa).

In terms of domain architecture, Peptidase S30 spans 139 to 284 (LKGQHTIHYV…GRDMSTIREF (146 aa)). Catalysis depends on for P1 proteinase activity residues His192, Asp201, and Ser232. An Involved in interaction with stylet and aphid transmission motif is present at residues 335–338 (RITC). An Involved in virions binding and aphid transmission motif is present at residues 593 to 595 (PTK). The region spanning 619-741 (MYIAKDGFCH…ESELKYYRVG (123 aa)) is the Peptidase C6 domain. Catalysis depends on for helper component proteinase activity residues Cys627 and His700.

Belongs to the potyviridae P3N-PIPO polyprotein family. As to quaternary structure, interacts (via PIPO domain) with host PCaP1 protein; this interaction may help to anchor the movement complex to the plasma membrane from which the complex could move to the plasmodesmata. Potyviral RNA is expressed as two polyproteins which undergo post-translational proteolytic processing. Genome polyprotein is processed by NIa-pro, P1 and HC-pro proteinases resulting in the production of at least ten individual proteins. P3N-PIPO is cleaved by P1 and HC-pro proteinases resulting in the production of three individual proteins. The P1 proteinase and the HC-pro cleave only their respective C-termini autocatalytically.

The protein resides in the host cell junction. It localises to the host plasmodesma. The enzyme catalyses Hydrolyzes a Gly-|-Gly bond at its own C-terminus, commonly in the sequence -Tyr-Xaa-Val-Gly-|-Gly, in the processing of the potyviral polyprotein.. Required for aphid transmission and also has proteolytic activity. Only cleaves a Gly-Gly dipeptide at its own C-terminus. Interacts with virions and aphid stylets. Acts as a suppressor of RNA-mediated gene silencing, also known as post-transcriptional gene silencing (PTGS), a mechanism of plant viral defense that limits the accumulation of viral RNAs. May have RNA-binding activity. Functionally, allows efficient cell to cell propagation, by bypassing the host cell wall barrier. Transports viral genome to neighboring plant cells directly through plasmosdesmata, without any budding. This chain is P3N-PIPO polyprotein, found in Arachis hypogaea (Peanut).